The chain runs to 329 residues: 3'-5' exonuclease (329 aa).

The tract at residues 26–88 (EEKPKPKKVV…MADVGTPSPE (63 aa)) is disordered. Residues 46 to 65 (KNLDTPEIVNKENAEVENPP) are compositionally biased toward basic and acidic residues. 2 positions are modified to phosphoserine: serine 78 and serine 86. The 3'-5' exonuclease domain maps to 130–288 (TEIVPMAFDM…IGQVIYREIE (159 aa)). Aspartate 138, glutamate 140, and aspartate 276 together coordinate Mg(2+).

The protein belongs to the WRNexo family.

It is found in the nucleus. Its function is as follows. Has exonuclease activity on both single-stranded and duplex templates bearing overhangs, but not blunt ended duplex DNA, and cleaves in a 3'-5' direction. Essential for the formation of DNA replication focal centers. Has an important role in maintaining genome stability. The sequence is that of 3'-5' exonuclease from Drosophila mojavensis (Fruit fly).